A 249-amino-acid polypeptide reads, in one-letter code: 5'-nucleotidase SurE (249 aa).

Residues D9, D10, S40, and N92 each contribute to the a divalent metal cation site.

This sequence belongs to the SurE nucleotidase family. Requires a divalent metal cation as cofactor.

It localises to the cytoplasm. The enzyme catalyses a ribonucleoside 5'-phosphate + H2O = a ribonucleoside + phosphate. In terms of biological role, nucleotidase that shows phosphatase activity on nucleoside 5'-monophosphates. The protein is 5'-nucleotidase SurE of Shewanella sp. (strain ANA-3).